Here is a 432-residue protein sequence, read N- to C-terminus: Polyadenylate-binding protein RBP47C (432 aa).

The disordered stretch occupies residues 1–55 (MADVKIQSESESSDSHPVVDNQPPPPPPPPQQPAKEEENQPKTSPTPPPHWMRYP). Residues 22-32 (QPPPPPPPPQQ) show a composition bias toward pro residues. 2 RRM domains span residues 101 to 183 (KTIW…WASF) and 197 to 276 (LSIF…PATP). The disordered stretch occupies residues 271 to 293 (IGPATPRKTNGYQQQGGYMPNGT). The segment covering 277-286 (RKTNGYQQQG) has biased composition (polar residues). The 73-residue stretch at 304–376 (TTIFVGGLDS…QTVRLSWGRN (73 aa)) folds into the RRM 3 domain.

Belongs to the polyadenylate-binding RBP47 family. In terms of assembly, interacts with the poly(A) tail of mRNA in nucleus. As to expression, expressed in leaves, stems, flowers, and seedlings.

The protein localises to the nucleus. Its subcellular location is the cytoplasmic granule. In terms of biological role, heterogeneous nuclear ribonucleoprotein (hnRNP)-protein binding the poly(A) tail of mRNA and probably involved in some steps of pre-mRNA maturation. The polypeptide is Polyadenylate-binding protein RBP47C (RBP47C) (Arabidopsis thaliana (Mouse-ear cress)).